A 159-amino-acid polypeptide reads, in one-letter code: Cyclic pyranopterin monophosphate synthase (159 aa).

Substrate is bound by residues 75-77 (LCH) and 113-114 (ME). Aspartate 128 is an active-site residue.

This sequence belongs to the MoaC family. Homohexamer; trimer of dimers.

It carries out the reaction (8S)-3',8-cyclo-7,8-dihydroguanosine 5'-triphosphate = cyclic pyranopterin phosphate + diphosphate. The protein operates within cofactor biosynthesis; molybdopterin biosynthesis. Functionally, catalyzes the conversion of (8S)-3',8-cyclo-7,8-dihydroguanosine 5'-triphosphate to cyclic pyranopterin monophosphate (cPMP). The sequence is that of Cyclic pyranopterin monophosphate synthase from Cupriavidus metallidurans (strain ATCC 43123 / DSM 2839 / NBRC 102507 / CH34) (Ralstonia metallidurans).